The primary structure comprises 95 residues: Co-chaperonin GroES (95 aa).

Belongs to the GroES chaperonin family. As to quaternary structure, heptamer of 7 subunits arranged in a ring. Interacts with the chaperonin GroEL.

It localises to the cytoplasm. Functionally, together with the chaperonin GroEL, plays an essential role in assisting protein folding. The GroEL-GroES system forms a nano-cage that allows encapsulation of the non-native substrate proteins and provides a physical environment optimized to promote and accelerate protein folding. GroES binds to the apical surface of the GroEL ring, thereby capping the opening of the GroEL channel. This chain is Co-chaperonin GroES, found in Stenotrophomonas maltophilia (strain R551-3).